Reading from the N-terminus, the 200-residue chain is Peptidyl-tRNA hydrolase (200 aa).

Residue Y23 coordinates tRNA. H28 acts as the Proton acceptor in catalysis. Positions 79, 81, and 127 each coordinate tRNA.

This sequence belongs to the PTH family. In terms of assembly, monomer.

It localises to the cytoplasm. It catalyses the reaction an N-acyl-L-alpha-aminoacyl-tRNA + H2O = an N-acyl-L-amino acid + a tRNA + H(+). Its function is as follows. Hydrolyzes ribosome-free peptidyl-tRNAs (with 1 or more amino acids incorporated), which drop off the ribosome during protein synthesis, or as a result of ribosome stalling. Functionally, catalyzes the release of premature peptidyl moieties from peptidyl-tRNA molecules trapped in stalled 50S ribosomal subunits, and thus maintains levels of free tRNAs and 50S ribosomes. In Streptomyces coelicolor (strain ATCC BAA-471 / A3(2) / M145), this protein is Peptidyl-tRNA hydrolase.